We begin with the raw amino-acid sequence, 312 residues long: Porphobilinogen deaminase (312 aa).

At Cys235 the chain carries S-(dipyrrolylmethanemethyl)cysteine.

It belongs to the HMBS family. As to quaternary structure, monomer. Dipyrromethane serves as cofactor.

It carries out the reaction 4 porphobilinogen + H2O = hydroxymethylbilane + 4 NH4(+). It participates in porphyrin-containing compound metabolism; protoporphyrin-IX biosynthesis; coproporphyrinogen-III from 5-aminolevulinate: step 2/4. Its function is as follows. Tetrapolymerization of the monopyrrole PBG into the hydroxymethylbilane pre-uroporphyrinogen in several discrete steps. The chain is Porphobilinogen deaminase from Mycolicibacterium gilvum (strain PYR-GCK) (Mycobacterium gilvum (strain PYR-GCK)).